Consider the following 721-residue polypeptide: bZIP transcription factor 17 (721 aa).

2 disordered regions span residues 1–51 (MAEP…LMSD) and 87–232 (QEQF…EKKR). Topologically, residues 1-366 (MAEPITKEQP…KSEAKTKKVA (366 aa)) are cytoplasmic. The segment covering 9–25 (QPPPPAPDPNSTYPPPS) has biased composition (pro residues). Residues 125 to 141 (ESPRDSDDRCSGADHNL) are compositionally biased toward basic and acidic residues. A compositionally biased stretch (polar residues) spans 146–170 (PLSSQGSGNCGSDVSEATNESSPKS). A compositionally biased stretch (basic and acidic residues) spans 204 to 216 (DESRNSKYRRSGE). One can recognise a bZIP domain in the interval 228–288 (DEKKRARLMR…AENATLRQQL (61 aa)). The basic motif stretch occupies residues 230 to 261 (KKRARLMRNRESAQLSRQRKKHYVEELEEKVR). The interval 267–274 (ITDLNGKI) is leucine-zipper. The disordered stretch occupies residues 337-359 (PRLKPQNTLGTSKAKKSESKKSE). A helical transmembrane segment spans residues 367–387 (SISFLGLLFCLFLFGALAPIV). The Lumenal segment spans residues 388-721 (NVNYGGISGA…RSGAPHLVTT (334 aa)). Polar residues predominate over residues 422–436 (TSRSGAGTGVSNSNG). Residues 422 to 462 (TSRSGAGTGVSNSNGMHRGRDSDRGARKNISATESSVTPGN) are disordered. Asn-450, Asn-462, Asn-609, and Asn-617 each carry an N-linked (GlcNAc...) asparagine glycan. The segment covering 451-462 (ISATESSVTPGN) has biased composition (polar residues). Residues 627 to 630 (RRIL) carry the RRIL cleavage motif motif. 2 N-linked (GlcNAc...) asparagine glycosylation sites follow: Asn-643 and Asn-651.

It belongs to the bZIP family. In terms of assembly, interacts with BZIP28.

Its subcellular location is the endoplasmic reticulum membrane. The protein localises to the golgi apparatus membrane. It is found in the nucleus. Its function is as follows. Transcriptional activator involved in salt and osmotic stress responses. Functions as a stress sensor and transducer in a signaling pathway that resembles an ER stress response. Following salt stress, BZIP17 is cleaved by SBT6.1 (S1P) and S2P at the C-terminus and the N-terminal bZIP component is translocated to the nucleus, where it activates the expression of salt stress response genes. Functions as a stress sensor and transducer in ER stress signaling pathway. ER stress induces proteolysis of BZIP17 by SBT6.1 (S1P) and S2P, and the N-terminal bZIP component is translocated to the nucleus, where it activates the expression and production of ER chaperones, as well as protein involved in brassinosteroid (BR) signaling, which is required for stress acclimation and growth. This chain is bZIP transcription factor 17, found in Arabidopsis thaliana (Mouse-ear cress).